A 152-amino-acid polypeptide reads, in one-letter code: CMT1A duplicated region transcript 4 protein (152 aa).

Residues 1 to 11 are compositionally biased toward basic and acidic residues; the sequence is MDARRMKKEEG. Disordered regions lie at residues 1-23 and 60-89; these read MDARRMKKEEGLTENTGLPRKLL and ERPWASRQNKPSSVIQPKRRKSSKSSGKAV. Residues 65-74 show a composition bias toward polar residues; it reads SRQNKPSSVI.

As to expression, expressed in fetal skeletal muscle and kidney.

In Homo sapiens (Human), this protein is CMT1A duplicated region transcript 4 protein (CDRT4).